We begin with the raw amino-acid sequence, 158 residues long: 6,7-dimethyl-8-ribityllumazine synthase (158 aa).

Residues phenylalanine 23, 61 to 63 (SFE), and 85 to 87 (AVI) contribute to the 5-amino-6-(D-ribitylamino)uracil site. A (2S)-2-hydroxy-3-oxobutyl phosphate-binding site is contributed by 90 to 91 (ET). Histidine 93 serves as the catalytic Proton donor. Phenylalanine 118 contributes to the 5-amino-6-(D-ribitylamino)uracil binding site. Arginine 132 lines the (2S)-2-hydroxy-3-oxobutyl phosphate pocket.

Belongs to the DMRL synthase family.

It carries out the reaction (2S)-2-hydroxy-3-oxobutyl phosphate + 5-amino-6-(D-ribitylamino)uracil = 6,7-dimethyl-8-(1-D-ribityl)lumazine + phosphate + 2 H2O + H(+). The protein operates within cofactor biosynthesis; riboflavin biosynthesis; riboflavin from 2-hydroxy-3-oxobutyl phosphate and 5-amino-6-(D-ribitylamino)uracil: step 1/2. Functionally, catalyzes the formation of 6,7-dimethyl-8-ribityllumazine by condensation of 5-amino-6-(D-ribitylamino)uracil with 3,4-dihydroxy-2-butanone 4-phosphate. This is the penultimate step in the biosynthesis of riboflavin. In Prochlorococcus marinus (strain MIT 9312), this protein is 6,7-dimethyl-8-ribityllumazine synthase.